The following is a 100-amino-acid chain: uncharacterized protein (100 aa).

The chain crosses the membrane as a helical span at residues 68–88 (VFLFFFTGSSPSFPAALLGLF).

The protein resides in the membrane. This is an uncharacterized protein from Saccharomyces cerevisiae (strain ATCC 204508 / S288c) (Baker's yeast).